The following is a 535-amino-acid chain: Phosphoenolpyruvate carboxykinase (ATP) (535 aa).

Substrate contacts are provided by R59, Y201, and K207. ATP is bound by residues K207, H226, and 243–251; that span reads GLSGTGKTT. Positions 207 and 226 each coordinate Mn(2+). Mn(2+) is bound at residue D264. ATP-binding positions include E292, R328, 444-445, and T450; that span reads RI. Residue R328 participates in substrate binding.

Belongs to the phosphoenolpyruvate carboxykinase (ATP) family. It depends on Mn(2+) as a cofactor.

Its subcellular location is the cytoplasm. It catalyses the reaction oxaloacetate + ATP = phosphoenolpyruvate + ADP + CO2. The protein operates within carbohydrate biosynthesis; gluconeogenesis. Involved in the gluconeogenesis. Catalyzes the conversion of oxaloacetate (OAA) to phosphoenolpyruvate (PEP) through direct phosphoryl transfer between the nucleoside triphosphate and OAA. This chain is Phosphoenolpyruvate carboxykinase (ATP), found in Bacteroides fragilis (strain ATCC 25285 / DSM 2151 / CCUG 4856 / JCM 11019 / LMG 10263 / NCTC 9343 / Onslow / VPI 2553 / EN-2).